The sequence spans 610 residues: Elongation factor 4 (610 aa).

Residues 11 to 193 (EKIRNFSIIA…QIVEKVPAPT (183 aa)) enclose the tr-type G domain. GTP-binding positions include 23 to 28 (DHGKST) and 140 to 143 (NKID).

This sequence belongs to the TRAFAC class translation factor GTPase superfamily. Classic translation factor GTPase family. LepA subfamily.

Its subcellular location is the cell membrane. It carries out the reaction GTP + H2O = GDP + phosphate + H(+). In terms of biological role, required for accurate and efficient protein synthesis under certain stress conditions. May act as a fidelity factor of the translation reaction, by catalyzing a one-codon backward translocation of tRNAs on improperly translocated ribosomes. Back-translocation proceeds from a post-translocation (POST) complex to a pre-translocation (PRE) complex, thus giving elongation factor G a second chance to translocate the tRNAs correctly. Binds to ribosomes in a GTP-dependent manner. The sequence is that of Elongation factor 4 from Streptococcus pyogenes serotype M12 (strain MGAS9429).